Reading from the N-terminus, the 362-residue chain is Dihydroorotate dehydrogenase (quinone) (362 aa).

Residues 60 to 64 (AGFDK) and Thr84 contribute to the FMN site. Substrate is bound at residue Lys64. Residue 109–113 (NRMGF) coordinates substrate. FMN contacts are provided by Asn137 and Asn168. Residue Asn168 coordinates substrate. Ser171 acts as the Nucleophile in catalysis. Asn173 lines the substrate pocket. Residues Lys213 and Ser241 each coordinate FMN. 242 to 243 (NT) contributes to the substrate binding site. FMN is bound by residues Gly264, Gly293, and 314-315 (YS).

This sequence belongs to the dihydroorotate dehydrogenase family. Type 2 subfamily. As to quaternary structure, monomer. FMN is required as a cofactor.

It is found in the cell membrane. It carries out the reaction (S)-dihydroorotate + a quinone = orotate + a quinol. It participates in pyrimidine metabolism; UMP biosynthesis via de novo pathway; orotate from (S)-dihydroorotate (quinone route): step 1/1. Its function is as follows. Catalyzes the conversion of dihydroorotate to orotate with quinone as electron acceptor. In Bartonella henselae (strain ATCC 49882 / DSM 28221 / CCUG 30454 / Houston 1) (Rochalimaea henselae), this protein is Dihydroorotate dehydrogenase (quinone).